The sequence spans 480 residues: MVVQNVQDLDVLPKHSSDSFDDDGRPKRTGTVWTASAHIITAVIGSGVLSLAWAVAQIGWIGGPVAMLLFSFVTFYTSTLLCSCYRSGDSVTGKRNYTYMDAIHSNLGGIKVKVCGVVQYVNLFGTAIGYTIASAISLVAIQRTSCQQMNGPNDPCHVNGNVYMIAFGIVQIIFSQIPDFDQLWWLSIVAAVMSFAYSAIGLGLGVSKVVENKEIKGSLTGVTVGTVTLSGTVTSSQKIWRTFQSLGNIAFAYSYSMILIEIQDTVKSPPAEVNTMRKATFVSVAVTTVFYMLCGCVGYAAFGDNAPGNLLAHGGFRNPYWLLDIANLAIVIHLVGAYQVYCQPLFAFVEKEASRRFPESEFVTKEIKIQLFPGKPFNLNLFRLVWRTFFVMTTTLISMLMPFFNDVVGLLGAIGFWPLTVYFPVEMYIAQKNVPRWGTKWVCLQVLSVTCLFVSVAAAAGSVIGIVSDLKVYKPFQSEF.

Residues 1–25 form a disordered region; the sequence is MVVQNVQDLDVLPKHSSDSFDDDGR. Residues 1-31 lie on the Cytoplasmic side of the membrane; the sequence is MVVQNVQDLDVLPKHSSDSFDDDGRPKRTGT. Positions 11-25 are enriched in basic and acidic residues; that stretch reads VLPKHSSDSFDDDGR. The next 2 membrane-spanning stretches (helical) occupy residues 32 to 52 and 53 to 73; these read VWTA…LSLA and WAVA…FSFV. At 74-120 the chain is on the cytoplasmic side; sequence TFYTSTLLCSCYRSGDSVTGKRNYTYMDAIHSNLGGIKVKVCGVVQY. The helical transmembrane segment at 121–141 threads the bilayer; it reads VNLFGTAIGYTIASAISLVAI. The Extracellular segment spans residues 142–157; the sequence is QRTSCQQMNGPNDPCH. Residues 158 to 178 form a helical membrane-spanning segment; the sequence is VNGNVYMIAFGIVQIIFSQIP. The Cytoplasmic portion of the chain corresponds to 179–182; the sequence is DFDQ. Residues 183 to 203 traverse the membrane as a helical segment; sequence LWWLSIVAAVMSFAYSAIGLG. At 204-241 the chain is on the extracellular side; the sequence is LGVSKVVENKEIKGSLTGVTVGTVTLSGTVTSSQKIWR. The chain crosses the membrane as a helical span at residues 242–262; the sequence is TFQSLGNIAFAYSYSMILIEI. Topologically, residues 263–280 are cytoplasmic; that stretch reads QDTVKSPPAEVNTMRKAT. Residues 281–301 traverse the membrane as a helical segment; the sequence is FVSVAVTTVFYMLCGCVGYAA. At 302–328 the chain is on the extracellular side; sequence FGDNAPGNLLAHGGFRNPYWLLDIANL. A helical membrane pass occupies residues 329 to 349; the sequence is AIVIHLVGAYQVYCQPLFAFV. The Cytoplasmic segment spans residues 350–383; it reads EKEASRRFPESEFVTKEIKIQLFPGKPFNLNLFR. A helical membrane pass occupies residues 384–404; the sequence is LVWRTFFVMTTTLISMLMPFF. At 405 to 406 the chain is on the extracellular side; sequence ND. A helical membrane pass occupies residues 407–427; that stretch reads VVGLLGAIGFWPLTVYFPVEM. At 428 to 445 the chain is on the cytoplasmic side; the sequence is YIAQKNVPRWGTKWVCLQ. A helical membrane pass occupies residues 446–466; that stretch reads VLSVTCLFVSVAAAAGSVIGI. The Extracellular segment spans residues 467–480; that stretch reads VSDLKVYKPFQSEF.

Belongs to the amino acid/polyamine transporter 2 family. Amino acid/auxin permease (AAAP) (TC 2.A.18.2) subfamily. Expressed in leaves, stems, roots, siliques and flowers.

It is found in the cell membrane. Inhibited by 2,4-dinitrophenol. Functionally, amino acid-proton symporter. Stereospecific transporter with a broad specificity for glutamate and both neutral and basic amino acids. Reduced affinities for asparagine and valine. High affinity transport of the cationic amino acids arginine and lysine, but not of histidine. The chain is Amino acid permease 5 (AAP5) from Arabidopsis thaliana (Mouse-ear cress).